The sequence spans 459 residues: Pup--protein ligase (459 aa).

Glu9 serves as a coordination point for Mg(2+). Arg54 contributes to the ATP binding site. Tyr56 serves as a coordination point for Mg(2+). Residue Asp58 is the Proton acceptor of the active site. Glu64 is a Mg(2+) binding site. Residues Thr67 and Trp421 each coordinate ATP.

The protein belongs to the Pup ligase/Pup deamidase family. Pup-conjugating enzyme subfamily.

It carries out the reaction ATP + [prokaryotic ubiquitin-like protein]-L-glutamate + [protein]-L-lysine = ADP + phosphate + N(6)-([prokaryotic ubiquitin-like protein]-gamma-L-glutamyl)-[protein]-L-lysine.. It functions in the pathway protein degradation; proteasomal Pup-dependent pathway. Its pathway is protein modification; protein pupylation. Functionally, catalyzes the covalent attachment of the prokaryotic ubiquitin-like protein modifier Pup to the proteasomal substrate proteins, thereby targeting them for proteasomal degradation. This tagging system is termed pupylation. The ligation reaction involves the side-chain carboxylate of the C-terminal glutamate of Pup and the side-chain amino group of a substrate lysine. The chain is Pup--protein ligase from Jonesia denitrificans (strain ATCC 14870 / DSM 20603 / BCRC 15368 / CIP 55.134 / JCM 11481 / NBRC 15587 / NCTC 10816 / Prevot 55134) (Listeria denitrificans).